The following is a 286-amino-acid chain: Putative WUSCHEL-related homeobox 2 (286 aa).

Disordered regions lie at residues 1–25 (MAPAVQQQQSGGGGGSTGAAAVGST) and 128–152 (SSSSSCGGGLNEDANSLLSPTSPTT). The homeobox; WUS-type DNA-binding region spans 23 to 87 (GSTTRWCPTP…NHKARDRQKL (65 aa)).

It belongs to the WUS homeobox family.

The protein localises to the nucleus. Functionally, transcription factor which may be involved in developmental processes. The chain is Putative WUSCHEL-related homeobox 2 (WOX2) from Oryza sativa subsp. indica (Rice).